The following is a 227-amino-acid chain: 3,4-dihydroxy-2-butanone 4-phosphate synthase (227 aa).

D-ribulose 5-phosphate-binding positions include 45-46, Asp50, 158-162, and Glu182; these read RE and RRGHT. Glu46 provides a ligand contact to Mg(2+). Mg(2+) is bound at residue His161.

This sequence belongs to the DHBP synthase family. As to quaternary structure, homodimer. It depends on Mg(2+) as a cofactor. Mn(2+) is required as a cofactor.

It carries out the reaction D-ribulose 5-phosphate = (2S)-2-hydroxy-3-oxobutyl phosphate + formate + H(+). It participates in cofactor biosynthesis; riboflavin biosynthesis; 2-hydroxy-3-oxobutyl phosphate from D-ribulose 5-phosphate: step 1/1. In terms of biological role, catalyzes the conversion of D-ribulose 5-phosphate to formate and 3,4-dihydroxy-2-butanone 4-phosphate. In Ralstonia nicotianae (strain ATCC BAA-1114 / GMI1000) (Ralstonia solanacearum), this protein is 3,4-dihydroxy-2-butanone 4-phosphate synthase.